The chain runs to 133 residues: Small ribosomal subunit protein uS11 (133 aa).

Belongs to the universal ribosomal protein uS11 family. In terms of assembly, part of the 30S ribosomal subunit.

In terms of biological role, located on the platform of the 30S subunit. The polypeptide is Small ribosomal subunit protein uS11 (Pyrobaculum aerophilum (strain ATCC 51768 / DSM 7523 / JCM 9630 / CIP 104966 / NBRC 100827 / IM2)).